We begin with the raw amino-acid sequence, 416 residues long: Serine hydroxymethyltransferase (416 aa).

(6S)-5,6,7,8-tetrahydrofolate contacts are provided by residues leucine 121 and 125-127 (GHL). Lysine 229 bears the N6-(pyridoxal phosphate)lysine mark.

This sequence belongs to the SHMT family. Homodimer. Pyridoxal 5'-phosphate is required as a cofactor.

Its subcellular location is the cytoplasm. It catalyses the reaction (6R)-5,10-methylene-5,6,7,8-tetrahydrofolate + glycine + H2O = (6S)-5,6,7,8-tetrahydrofolate + L-serine. It functions in the pathway one-carbon metabolism; tetrahydrofolate interconversion. The protein operates within amino-acid biosynthesis; glycine biosynthesis; glycine from L-serine: step 1/1. Its function is as follows. Catalyzes the reversible interconversion of serine and glycine with tetrahydrofolate (THF) serving as the one-carbon carrier. This reaction serves as the major source of one-carbon groups required for the biosynthesis of purines, thymidylate, methionine, and other important biomolecules. Also exhibits THF-independent aldolase activity toward beta-hydroxyamino acids, producing glycine and aldehydes, via a retro-aldol mechanism. This Azoarcus sp. (strain BH72) protein is Serine hydroxymethyltransferase.